A 322-amino-acid polypeptide reads, in one-letter code: Large ribosomal subunit protein uL15m (322 aa).

The transit peptide at 1-57 (MKAERQTGLRNSFTTVIGRKLINTFVPSMMLTSVAGNDIFFRGLFKSPVLAFQSYRY) directs the protein to the mitochondrion. The disordered stretch occupies residues 69–99 (GSTKSFKRLGRGPSSGLGKTSGRGQKGQKAR). Residues 81-93 (PSSGLGKTSGRGQ) are compositionally biased toward gly residues.

It belongs to the universal ribosomal protein uL15 family. In terms of assembly, component of the mitochondrial large ribosomal subunit (mt-LSU). Mature yeast 74S mitochondrial ribosomes consist of a small (37S) and a large (54S) subunit. The 37S small subunit contains a 15S ribosomal RNA (15S mt-rRNA) and 34 different proteins. The 54S large subunit contains a 21S rRNA (21S mt-rRNA) and 46 different proteins.

It is found in the mitochondrion. Its function is as follows. Component of the mitochondrial ribosome (mitoribosome), a dedicated translation machinery responsible for the synthesis of mitochondrial genome-encoded proteins, including at least some of the essential transmembrane subunits of the mitochondrial respiratory chain. The mitoribosomes are attached to the mitochondrial inner membrane and translation products are cotranslationally integrated into the membrane. This chain is Large ribosomal subunit protein uL15m (MRPL10), found in Saccharomyces cerevisiae (strain ATCC 204508 / S288c) (Baker's yeast).